The following is a 72-amino-acid chain: Protein LITTLE ZIPPER 4 (72 aa).

Positions 14 to 44 (YIIKENERLRKKAQILNQENQQLLFELKQKL) form a coiled coil. The segment at 42-72 (QKLSKTKNSSGSNQGNNNNNNNLSSSSSASG) is disordered. Residues 49–72 (NSSGSNQGNNNNNNNLSSSSSASG) show a composition bias toward low complexity.

As to quaternary structure, interacts with REV.

Competitive inhibitor of the HD-ZIPIII transcription factors in shoot apical meristem (SAM) development. Acts by forming non-functional heterodimers. Part of a negative feedback loop. Essential for proper functioning of stem cells in the SAM. The protein is Protein LITTLE ZIPPER 4 of Arabidopsis thaliana (Mouse-ear cress).